The primary structure comprises 350 residues: Uroporphyrinogen decarboxylase (350 aa).

Substrate-binding positions include 28–32 (RQAGR), Asp78, Tyr155, Ser210, and His325.

Belongs to the uroporphyrinogen decarboxylase family. Homodimer.

It localises to the cytoplasm. It catalyses the reaction uroporphyrinogen III + 4 H(+) = coproporphyrinogen III + 4 CO2. It functions in the pathway porphyrin-containing compound metabolism; protoporphyrin-IX biosynthesis; coproporphyrinogen-III from 5-aminolevulinate: step 4/4. Its function is as follows. Catalyzes the decarboxylation of four acetate groups of uroporphyrinogen-III to yield coproporphyrinogen-III. The chain is Uroporphyrinogen decarboxylase from Trichormus variabilis (strain ATCC 29413 / PCC 7937) (Anabaena variabilis).